Reading from the N-terminus, the 215-residue chain is L-fuculose phosphate aldolase (215 aa).

Residues 28–29 (GN), 43–44 (TG), and 71–72 (SS) each bind substrate. Residue Glu73 is the Proton donor/acceptor of the active site. 4 residues coordinate Zn(2+): Glu73, His92, His94, and His155.

This sequence belongs to the aldolase class II family. AraD/FucA subfamily. As to quaternary structure, homotetramer. The cofactor is Zn(2+).

It catalyses the reaction L-fuculose 1-phosphate = (S)-lactaldehyde + dihydroxyacetone phosphate. It participates in carbohydrate degradation; L-fucose degradation; L-lactaldehyde and glycerone phosphate from L-fucose: step 3/3. Involved in the degradation of L-fucose and D-arabinose. Catalyzes the reversible cleavage of L-fuculose 1-phosphate (Fuc1P) to yield dihydroxyacetone phosphate (DHAP) and L-lactaldehyde. This chain is L-fuculose phosphate aldolase, found in Escherichia coli O157:H7.